Reading from the N-terminus, the 1155-residue chain is uncharacterized protein (1155 aa).

Residues 1–19 (MNKNIFITLLISSLLLLSG) form the signal peptide. A lipid anchor (N-palmitoyl cysteine) is attached at Cys20. Cys20 carries the S-diacylglycerol cysteine lipid modification. 4 helical membrane-spanning segments follow: residues 291 to 311 (VSAI…IGNI), 395 to 415 (LGFI…FLIF), 424 to 444 (ALIT…FMLF), and 459 to 479 (ISYA…SMII).

It belongs to the TrbL/VirB6 family.

Its subcellular location is the cell membrane. This is an uncharacterized protein from Rickettsia felis (strain ATCC VR-1525 / URRWXCal2) (Rickettsia azadi).